The sequence spans 72 residues: UPF0346 protein GTNG_1419 (72 aa).

It belongs to the UPF0346 family.

The polypeptide is UPF0346 protein GTNG_1419 (Geobacillus thermodenitrificans (strain NG80-2)).